The following is a 313-amino-acid chain: Type II methyltransferase M.NlaX (313 aa).

An SAM-dependent MTase C5-type domain is found at 2 to 308 (FKIIDLFAGI…EQMKAALSAV (307 aa)). Cysteine 74 is an active-site residue.

It belongs to the class I-like SAM-binding methyltransferase superfamily. C5-methyltransferase family.

The catalysed reaction is a 2'-deoxycytidine in DNA + S-adenosyl-L-methionine = a 5-methyl-2'-deoxycytidine in DNA + S-adenosyl-L-homocysteine + H(+). A methylase, recognizes the double-stranded sequence 5'-CCNGG-3' and methylates C-2 on both strands. May be the equivalent of dcm in this bacteria, or it may protect the DNA from cleavage by the putative NlaXP endonuclease. This is Type II methyltransferase M.NlaX (nlaXM) from Neisseria lactamica.